The following is a 1054-amino-acid chain: CCAAT/enhancer-binding protein zeta (1054 aa).

Positions 1 to 20 (MAAVKEPLEFHAKRPWRPEE) are enriched in basic and acidic residues. Disordered regions lie at residues 1–42 (MAAV…GFSL) and 102–160 (VEED…PKVK). Positions 21–34 (AVEDPDEEDEDNTS) are enriched in acidic residues. Over residues 109–120 (EKENSSKKEVKI) the composition is skewed to basic and acidic residues. Residue Ser113 is modified to Phosphoserine. Over residues 124–138 (NNKNTAESQRTSVNK) the composition is skewed to polar residues. The residue at position 629 (Ser629) is a Phosphoserine. Lys695 carries the post-translational modification N6-acetyllysine. A Phosphoserine modification is found at Ser835. Disordered stretches follow at residues 873 to 902 (RTKG…DEVS) and 915 to 969 (DEDG…KKRN). 2 stretches are compositionally biased toward acidic residues: residues 882–902 (LDED…DEVS) and 915–933 (DEDG…ESVP). Phosphoserine is present on residues Ser959, Ser973, and Ser978. Positions 1031 to 1054 (IIKKKKHFKKKRIKTTQKTKKQRK) are disordered.

It belongs to the CBF/MAK21 family.

The protein resides in the nucleus. Functionally, stimulates transcription from the HSP70 promoter. This is CCAAT/enhancer-binding protein zeta (CEBPZ) from Homo sapiens (Human).